Consider the following 373-residue polypeptide: Filamin-binding LIM protein 1 (373 aa).

The segment at 1-70 (MASKPEKRVA…SPWTTPGRAA (70 aa)) is filamin-binding. 2 disordered regions span residues 41-119 (RPWE…PSEE) and 135-176 (QLHL…PVEK). The segment covering 104–114 (LPPPPPPPPVL) has biased composition (pro residues). LIM zinc-binding domains are found at residues 181–242 (DICA…TLER), 243–300 (CGKC…RKFA), and 301–370 (PVCS…RSAA). The tract at residues 276–373 (IGDESFALGS…HVKRSAAGCC (98 aa)) is FERMT2-binding.

As to quaternary structure, interacts with NKX2-5. Isoform 1 and isoform 3 interact with FERMT2, FLNA, FLNB and FLNC. Isoform 2 interacts with FLNB. In terms of tissue distribution, isoform 1 and isoform 3 are expressed in heart, kidney, lung, pancreas, placenta and platelets. Isoform 2 is expressed in brain, heart, kidney, lung, pancreas, placenta, skeletal muscle and platelets.

Its subcellular location is the cell junction. It localises to the focal adhesion. The protein resides in the cytoplasm. The protein localises to the cytoskeleton. It is found in the stress fiber. Its function is as follows. Serves as an anchoring site for cell-ECM adhesion proteins and filamin-containing actin filaments. Is implicated in cell shape modulation (spreading) and motility. May participate in the regulation of filamin-mediated cross-linking and stabilization of actin filaments. May also regulate the assembly of filamin-containing signaling complexes that control actin assembly. Promotes dissociation of FLNA from ITGB3 and ITGB7. Promotes activation of integrins and regulates integrin-mediated cell-cell adhesion. The protein is Filamin-binding LIM protein 1 (FBLIM1) of Homo sapiens (Human).